A 216-amino-acid chain; its full sequence is Transmembrane emp24 domain-containing protein p24delta5 (216 aa).

The first 27 residues, M1–A27, serve as a signal peptide directing secretion. Residues I28–R183 lie on the Lumenal side of the membrane. One can recognise a GOLD domain in the interval T38–R151. An N-linked (GlcNAc...) asparagine glycan is attached at N86. Positions A137–I159 form a coiled coil. Residues R169 and R174 each carry the omega-N-methylated arginine modification. The chain crosses the membrane as a helical span at residues V184–L204. Over Y205–I216 the chain is Cytoplasmic. Residues Y209 to F210 carry the COPII vesicle coat-binding motif. Residues Y209–I216 carry the COPI vesicle coat-binding motif.

The protein belongs to the EMP24/GP25L family. In terms of assembly, probably oligomerizes with other members of the EMP24/GP25L family. Associates with the COPI vesicle coat (coatomer). Associates with the COPII vesicle coat (coatomer). Interacts with p24beta2.

The protein localises to the endoplasmic reticulum membrane. In terms of biological role, involved in vesicular protein trafficking. Mainly functions in the early secretory pathway. Thought to act as cargo receptor at the lumenal side for incorporation of secretory cargo molecules into transport vesicles and to be involved in vesicle coat formation at the cytoplasmic side. Interacts with p24beta2 at endoplasmic reticulum export sites for endoplasmic reticulum exit and coupled transport to the Golgi apparatus. Once in the Golgi, interacts very efficiently with the COPI machinery for retrograde transport back to the endoplasmic reticulum. This Arabidopsis thaliana (Mouse-ear cress) protein is Transmembrane emp24 domain-containing protein p24delta5.